A 311-amino-acid chain; its full sequence is Ribosomal RNA small subunit methyltransferase H (311 aa).

S-adenosyl-L-methionine is bound by residues 39–41, D59, F81, D102, and H109; that span reads GGH.

It belongs to the methyltransferase superfamily. RsmH family.

It is found in the cytoplasm. The enzyme catalyses cytidine(1402) in 16S rRNA + S-adenosyl-L-methionine = N(4)-methylcytidine(1402) in 16S rRNA + S-adenosyl-L-homocysteine + H(+). Functionally, specifically methylates the N4 position of cytidine in position 1402 (C1402) of 16S rRNA. The chain is Ribosomal RNA small subunit methyltransferase H from Porphyromonas gingivalis (strain ATCC BAA-308 / W83).